The following is a 152-amino-acid chain: Ribosome maturation factor RimP (152 aa).

This sequence belongs to the RimP family.

Its subcellular location is the cytoplasm. In terms of biological role, required for maturation of 30S ribosomal subunits. The protein is Ribosome maturation factor RimP of Escherichia coli (strain K12 / MC4100 / BW2952).